Here is a 134-residue protein sequence, read N- to C-terminus: Ribosome-binding factor A (134 aa).

The protein belongs to the RbfA family. Monomer. Binds 30S ribosomal subunits, but not 50S ribosomal subunits or 70S ribosomes.

The protein resides in the cytoplasm. One of several proteins that assist in the late maturation steps of the functional core of the 30S ribosomal subunit. Associates with free 30S ribosomal subunits (but not with 30S subunits that are part of 70S ribosomes or polysomes). Required for efficient processing of 16S rRNA. May interact with the 5'-terminal helix region of 16S rRNA. This Tolumonas auensis (strain DSM 9187 / NBRC 110442 / TA 4) protein is Ribosome-binding factor A.